We begin with the raw amino-acid sequence, 80 residues long: Protein YibX (80 aa).

The chain is Protein YibX from Escherichia coli (strain K12).